Reading from the N-terminus, the 348-residue chain is GTPase Obg 1 (348 aa).

One can recognise an Obg domain in the interval 1-159 (MSFVDEAKIH…HCVLLKLKIV (159 aa)). Positions 160 to 329 (SDVGIIGMPN…LHAQVKKAVV (170 aa)) constitute an OBG-type G domain. GTP is bound by residues 166-173 (GMPNAGKS), 191-195 (FTTLE), 212-215 (DIPG), 279-282 (NKCD), and 310-312 (GDE). Mg(2+) is bound by residues serine 173 and threonine 193.

The protein belongs to the TRAFAC class OBG-HflX-like GTPase superfamily. OBG GTPase family. As to quaternary structure, monomer. Mg(2+) is required as a cofactor.

It localises to the cytoplasm. Its function is as follows. An essential GTPase which binds GTP, GDP and possibly (p)ppGpp with moderate affinity, with high nucleotide exchange rates and a fairly low GTP hydrolysis rate. Plays a role in control of the cell cycle, stress response, ribosome biogenesis and in those bacteria that undergo differentiation, in morphogenesis control. This chain is GTPase Obg 1, found in Anaplasma marginale (strain Florida).